We begin with the raw amino-acid sequence, 94 residues long: DNA-directed RNA polymerase subunit omega (94 aa).

Belongs to the RNA polymerase subunit omega family. In terms of assembly, the RNAP catalytic core consists of 2 alpha, 1 beta, 1 beta' and 1 omega subunit. When a sigma factor is associated with the core the holoenzyme is formed, which can initiate transcription.

The catalysed reaction is RNA(n) + a ribonucleoside 5'-triphosphate = RNA(n+1) + diphosphate. Functionally, promotes RNA polymerase assembly. Latches the N- and C-terminal regions of the beta' subunit thereby facilitating its interaction with the beta and alpha subunits. This Bifidobacterium longum subsp. infantis (strain ATCC 15697 / DSM 20088 / JCM 1222 / NCTC 11817 / S12) protein is DNA-directed RNA polymerase subunit omega.